Consider the following 1126-residue polypeptide: DNA-directed RNA polymerase subunit Rpo2 (1126 aa).

4 residues coordinate Zn(2+): Cys-1060, Cys-1063, Cys-1078, and His-1081.

The protein belongs to the RNA polymerase beta chain family. As to quaternary structure, part of the 13-subunit RNA polymerase complex. Interacts with TFS4. In terms of assembly, (Microbial infection) Binds viral protein RIP which blocks global transcription. Zn(2+) serves as cofactor.

It is found in the cytoplasm. The enzyme catalyses RNA(n) + a ribonucleoside 5'-triphosphate = RNA(n+1) + diphosphate. Its function is as follows. DNA-dependent RNA polymerase (RNAP) catalyzes the transcription of DNA into RNA using the four ribonucleoside triphosphates as substrates. This subunit is involved in DNA promoter recognition. The sequence is that of DNA-directed RNA polymerase subunit Rpo2 from Sulfolobus acidocaldarius (strain ATCC 33909 / DSM 639 / JCM 8929 / NBRC 15157 / NCIMB 11770).